A 335-amino-acid polypeptide reads, in one-letter code: Fructokinase-2 (335 aa).

It belongs to the carbohydrate kinase PfkB family. Expressed in roots, at higher levels in stems, and hardly detectable in leaves.

The enzyme catalyses D-fructose + ATP = D-fructose 6-phosphate + ADP + H(+). It participates in glycan biosynthesis; starch biosynthesis. With respect to regulation, inhibited at high fructose. Functionally, may play an important role in maintaining the flux of carbon towards starch formation. May also be involved in a sugar-sensing pathway. This chain is Fructokinase-2 (FRK2), found in Zea mays (Maize).